Reading from the N-terminus, the 525-residue chain is Zinc finger protein 678 (525 aa).

14 C2H2-type zinc fingers span residues 97–119 (FQCIECGRNFSWRSILTEHKRIH), 125–147 (YKCEECGKVFNRCSNLTKHKRIH), 153–175 (YKCDECGKVFNWWSQLTNHKKIH), 181–203 (YKCDECDKVFNWWSQLTSHKKIH), 209–231 (YPCEECGKAFTQFSNLTQHKRIH), 237–259 (YKCKECCKAFNKFSNLTQHKRIH), 265–287 (YKCEECGNVFNECSHLTRHRRIH), 293–315 (YKCEECGKAFTQFASLTRHKRIH), 321–343 (YQCEECGKTFNRCSHLSSHKRIH), 349–371 (YKCEECGRTFTQFSNLTQHKRIH), 377–399 (YKCKECGKAFNKFSSLTQHRRIH), 405–427 (YKCEECGKVFKQCSHLTSHKRIH), 433–455 (YKCKECGKAFYQSSILSKHKRIH), and 461–483 (YKCEECGKAFNQFSSLTRHKRIH). The C2H2-type 15; degenerate zinc-finger motif lies at 489 to 511 (YKCKECGKGFYQSSIHSKYKRIY).

The protein belongs to the krueppel C2H2-type zinc-finger protein family.

The protein resides in the nucleus. Its function is as follows. May be involved in transcriptional regulation. The sequence is that of Zinc finger protein 678 (ZNF678) from Homo sapiens (Human).